The primary structure comprises 319 residues: Cytochrome f (319 aa).

Residues 1 to 34 form the signal peptide; the sequence is MQNRNTYDLKKKMTRLISVLVMIHIITRTSISNA. Heme-binding residues include Tyr35, Cys55, Cys58, and His59. Residues 285–304 form a helical membrane-spanning segment; it reads VKGLLLFLASVILAQIFLVL.

Belongs to the cytochrome f family. As to quaternary structure, the 4 large subunits of the cytochrome b6-f complex are cytochrome b6, subunit IV (17 kDa polypeptide, petD), cytochrome f and the Rieske protein, while the 4 small subunits are PetG, PetL, PetM and PetN. The complex functions as a dimer. Heme is required as a cofactor.

The protein localises to the plastid. The protein resides in the chloroplast thylakoid membrane. In terms of biological role, component of the cytochrome b6-f complex, which mediates electron transfer between photosystem II (PSII) and photosystem I (PSI), cyclic electron flow around PSI, and state transitions. This is Cytochrome f (petA) from Picea abies (Norway spruce).